A 770-amino-acid polypeptide reads, in one-letter code: DNA topoisomerase 1 (770 aa).

The 137-residue stretch at 4-140 (FRIIIAEKAD…EIRRAKFSAL (137 aa)) folds into the Toprim domain. Mg(2+)-binding residues include Glu-10 and Asp-109. Positions 156-563 (NYSLADAADA…ESKKMLHEVL (408 aa)) constitute a Topo IA-type catalytic domain. Positions 194 to 199 (SAGRVQ) are interaction with DNA. Tyr-312 functions as the O-(5'-phospho-DNA)-tyrosine intermediate in the catalytic mechanism. 3 C4-type zinc fingers span residues 611 to 638 (CEDP…CPVC), 673 to 700 (CPAD…YPKC), and 719 to 744 (CPYC…NMQC).

This sequence belongs to the type IA topoisomerase family. Monomer. It depends on Mg(2+) as a cofactor.

The catalysed reaction is ATP-independent breakage of single-stranded DNA, followed by passage and rejoining.. Functionally, releases the supercoiling and torsional tension of DNA, which is introduced during the DNA replication and transcription, by transiently cleaving and rejoining one strand of the DNA duplex. Introduces a single-strand break via transesterification at a target site in duplex DNA. The scissile phosphodiester is attacked by the catalytic tyrosine of the enzyme, resulting in the formation of a DNA-(5'-phosphotyrosyl)-enzyme intermediate and the expulsion of a 3'-OH DNA strand. The free DNA strand then undergoes passage around the unbroken strand, thus removing DNA supercoils. Finally, in the religation step, the DNA 3'-OH attacks the covalent intermediate to expel the active-site tyrosine and restore the DNA phosphodiester backbone. The chain is DNA topoisomerase 1 from Thermoplasma acidophilum (strain ATCC 25905 / DSM 1728 / JCM 9062 / NBRC 15155 / AMRC-C165).